The following is a 221-amino-acid chain: Antigenic protein SchS34 (221 aa).

4 N-linked (GlcNAc...) asparagine glycosylation sites follow: N27, N69, N141, and N215.

As to expression, expressed in the mycelium (at protein level).

Its subcellular location is the secreted. It localises to the spore. It is found in the spore wall. The protein localises to the cytoplasm. The polypeptide is Antigenic protein SchS34 (Stachybotrys chartarum (Toxic black mold)).